A 231-amino-acid chain; its full sequence is Probable tetraspanin tspE (231 aa).

Residues 1–21 are Cytoplasmic-facing; the sequence is MTFVDNFEFNQNTPRLVRGPF. Residues 22–42 form a helical membrane-spanning segment; it reads IILNSIIFSLSFILLCSTGII. Topologically, residues 43-58 are extracellular; it reads IYYLNEYYLVKDLTIP. Residues 59-79 form a helical membrane-spanning segment; that stretch reads LGSFILSAYMVITTIVGGIAI. The Cytoplasmic segment spans residues 80–83; the sequence is WKKK. A helical transmembrane segment spans residues 84 to 104; it reads LGLHLTFMVFLVVLIVCLVGV. At 105-195 the chain is on the extracellular side; the sequence is SAKMIVDSGN…VESILKYLGY (91 aa). A helical transmembrane segment spans residues 196–216; sequence YGIVLSVIELILLILSGFFLL. Over 217-231 the chain is Cytoplasmic; that stretch reads KTNKNVKSKSFILQD.

The protein belongs to the tetraspanin (TM4SF) family.

The protein resides in the membrane. This is Probable tetraspanin tspE (tspE) from Dictyostelium discoideum (Social amoeba).